Here is a 1180-residue protein sequence, read N- to C-terminus: Tudor domain-containing protein 1 (1180 aa).

Disordered regions lie at residues 1 to 66 (MSVK…KKNN) and 79 to 138 (SQED…RPAK). A compositionally biased stretch (basic and acidic residues) spans 27-41 (NFEKNENKLPPHESL). Polar residues-rich tracts occupy residues 79–91 (SQED…NPNG) and 110–122 (NSVS…SNSP). Positions 170, 173, 181, 184, 190, 194, 202, and 206 each coordinate Zn(2+). Residues 170-206 (CHRCGLFGSLRCSQCKQTYYCSTACQRRDWSAHSIVC) form an MYND-type zinc finger. Positions 312–372 (IPVKGEVCIA…YHLNRNIDLF (61 aa)) constitute a Tudor 1 domain. A disordered region spans residues 450–469 (SGQDSKKENADQSDPEDVGK). Tudor domains lie at 541–600 (YPAI…LLEL), 762–821 (KAEI…FLNL), and 990–1048 (RPRI…HLAL).

This sequence belongs to the TDRD1 family. In terms of assembly, found in a mRNP complex, at least composed of TDRD1, TDRD6, TDRD7 and DDX4. Interacts with MAEL. Interacts with PIWIL1, PIWIL2 and PIWIL4 (when methylated on arginine residues). Interacts with TDRD12. In terms of tissue distribution, testis and ovary specific. Also expressed in several cancers.

It localises to the cytoplasm. Functionally, plays a central role during spermatogenesis by participating in the repression transposable elements and preventing their mobilization, which is essential for the germline integrity. Acts via the piRNA metabolic process, which mediates the repression of transposable elements during meiosis by forming complexes composed of piRNAs and Piwi proteins and governs the methylation and subsequent repression of transposons. Required for the localization of Piwi proteins to the meiotic nuage. Involved in the piRNA metabolic process by ensuring the entry of correct transcripts into the normal piRNA pool and limiting the entry of cellular transcripts into the piRNA pathway. May act by allowing the recruitment of piRNA biogenesis or loading factors that ensure the correct entry of transcripts and piRNAs into Piwi proteins. This is Tudor domain-containing protein 1 (TDRD1) from Homo sapiens (Human).